Here is a 292-residue protein sequence, read N- to C-terminus: Large ribosomal subunit protein uL18 (292 aa).

Belongs to the universal ribosomal protein uL18 family. Component of the large ribosomal subunit (LSU).

It is found in the cytoplasm. The protein localises to the nucleus. Component of the ribosome, a large ribonucleoprotein complex responsible for the synthesis of proteins in the cell. The small ribosomal subunit (SSU) binds messenger RNAs (mRNAs) and translates the encoded message by selecting cognate aminoacyl-transfer RNA (tRNA) molecules. The large subunit (LSU) contains the ribosomal catalytic site termed the peptidyl transferase center (PTC), which catalyzes the formation of peptide bonds, thereby polymerizing the amino acids delivered by tRNAs into a polypeptide chain. The nascent polypeptides leave the ribosome through a tunnel in the LSU and interact with protein factors that function in enzymatic processing, targeting, and the membrane insertion of nascent chains at the exit of the ribosomal tunnel. The chain is Large ribosomal subunit protein uL18 (rpl5) from Dictyostelium discoideum (Social amoeba).